We begin with the raw amino-acid sequence, 869 residues long: MTESEIPKEYNASEVEEKWMDKWDLSMYHFNWGEDPRPQYIIDTPPPYPTGNFHIGNALNWCYIDFVARYKRMRGYNVMFPQGWDCHGLPTEVKVEEIHGITKNQVPRAEFRKMCRELTAGNIDKMRKTMLRLGFSVDWSNEFITMDPSYFVKTQKSFVRMYNKDYIYHEEHPVNWCPRCETAIAFAEVEYETRQTKLNFVHFDKVDIATTRPELMAACVAVAVNPEDKRYSQYVGQEITVPLFGQKVTLIADEDVEPEFGTGAVMICTFGDKQDVRWWVKYELPLIKAIDKQGKMTKAAGKYEGLSIAECREAVVADLKAAGFLYDQKPLEQNVGLCWRCDTPIEILSEPQWFVKIDNDAILKAADEIKWYPEYMKVRLQNWTGTMEWDWCISRQRIFATPIPIWHCKKCGEVMVAEESWLPIDPNEAAPKKACACGSTEFEPETDVLDTWMDSSITALHVTGWESEHDLRLPAQIRPQGHDIIRTWAFYTILRSLALEGKRPWDSIVINGMVLGPDGHKMSKSLGNVISPEEVTTKYSADAFRQWGAVGGSTGSDVMFRWKDVVSASRFLQKMWSIYRFSMSHLKGFGQEDAEKFQKDSLHIIDRWLLSKLNRLVDTATKELDDYQFDSTFKAIRGFAWEVLADNYLELVKGRLYGDDPEGKRAAQYVLYRTTKTLSLLLAPFIPFFAEELYSRLSDESVHTQAWPAVDESLINEEAEAAGELIKEITGEVRRYKSELGMALNAPLKKLEIYNADIDTGDIAGAANSKVELMEGAPSFEYVPVEVKPNMGILGPRFRKDAGAVVKALKAESPAAIEAQAASGKITVNVDGKPIELEPEAVEIRKEVISGGREVDVLEVRGAVVVIVR.

The 'HIGH' region signature appears at Pro47 to Asn57. Residues Lys521–Ser525 carry the 'KMSKS' region motif. Residue Lys524 coordinates ATP.

Belongs to the class-I aminoacyl-tRNA synthetase family. ValS type 2 subfamily.

It localises to the cytoplasm. The enzyme catalyses tRNA(Val) + L-valine + ATP = L-valyl-tRNA(Val) + AMP + diphosphate. Its function is as follows. Catalyzes the attachment of valine to tRNA(Val). As ValRS can inadvertently accommodate and process structurally similar amino acids such as threonine, to avoid such errors, it has a 'posttransfer' editing activity that hydrolyzes mischarged Thr-tRNA(Val) in a tRNA-dependent manner. The polypeptide is Valine--tRNA ligase (Methanosarcina barkeri (strain Fusaro / DSM 804)).